A 367-amino-acid chain; its full sequence is 3-dehydroquinate synthase (367 aa).

Residues 69 to 74 (DGEAFK), 103 to 107 (GVIGD), 127 to 128 (TT), Lys-140, and Lys-149 each bind NAD(+). Residues Glu-182, His-245, and His-262 each coordinate Zn(2+).

It belongs to the sugar phosphate cyclases superfamily. Dehydroquinate synthase family. Co(2+) serves as cofactor. Requires Zn(2+) as cofactor. The cofactor is NAD(+).

Its subcellular location is the cytoplasm. It carries out the reaction 7-phospho-2-dehydro-3-deoxy-D-arabino-heptonate = 3-dehydroquinate + phosphate. The protein operates within metabolic intermediate biosynthesis; chorismate biosynthesis; chorismate from D-erythrose 4-phosphate and phosphoenolpyruvate: step 2/7. Catalyzes the conversion of 3-deoxy-D-arabino-heptulosonate 7-phosphate (DAHP) to dehydroquinate (DHQ). The polypeptide is 3-dehydroquinate synthase (Pseudomonas savastanoi pv. phaseolicola (strain 1448A / Race 6) (Pseudomonas syringae pv. phaseolicola (strain 1448A / Race 6))).